The chain runs to 558 residues: Urocanate hydratase (558 aa).

Residues 50-51 (GG), glutamine 128, 174-176 (GMG), glutamate 194, arginine 199, 240-241 (NA), 261-265 (QTSAH), 271-272 (YI), and tyrosine 320 contribute to the NAD(+) site. Cysteine 408 is an active-site residue. An NAD(+)-binding site is contributed by glycine 490.

The protein belongs to the urocanase family. It depends on NAD(+) as a cofactor.

The protein resides in the cytoplasm. The enzyme catalyses 4-imidazolone-5-propanoate = trans-urocanate + H2O. The protein operates within amino-acid degradation; L-histidine degradation into L-glutamate; N-formimidoyl-L-glutamate from L-histidine: step 2/3. Catalyzes the conversion of urocanate to 4-imidazolone-5-propionate. The sequence is that of Urocanate hydratase from Deinococcus radiodurans (strain ATCC 13939 / DSM 20539 / JCM 16871 / CCUG 27074 / LMG 4051 / NBRC 15346 / NCIMB 9279 / VKM B-1422 / R1).